Consider the following 199-residue polypeptide: Holliday junction branch migration complex subunit RuvA (199 aa).

A domain I region spans residues 1–63 (MIASVRGEVL…EDSMTLYGFS (63 aa)). Residues 64 to 141 (DTESKDLFSL…DAVATTAGAA (78 aa)) are domain II. The segment at 141–145 (ASGAV) is flexible linker. The tract at residues 146–199 (VGSSIRDQIVEALEGLGFPIKQAEQATDSVLAESPEATTSVALRSALSLLGKTR) is domain III.

This sequence belongs to the RuvA family. As to quaternary structure, homotetramer. Forms an RuvA(8)-RuvB(12)-Holliday junction (HJ) complex. HJ DNA is sandwiched between 2 RuvA tetramers; dsDNA enters through RuvA and exits via RuvB. An RuvB hexamer assembles on each DNA strand where it exits the tetramer. Each RuvB hexamer is contacted by two RuvA subunits (via domain III) on 2 adjacent RuvB subunits; this complex drives branch migration. In the full resolvosome a probable DNA-RuvA(4)-RuvB(12)-RuvC(2) complex forms which resolves the HJ.

It localises to the cytoplasm. Its function is as follows. The RuvA-RuvB-RuvC complex processes Holliday junction (HJ) DNA during genetic recombination and DNA repair, while the RuvA-RuvB complex plays an important role in the rescue of blocked DNA replication forks via replication fork reversal (RFR). RuvA specifically binds to HJ cruciform DNA, conferring on it an open structure. The RuvB hexamer acts as an ATP-dependent pump, pulling dsDNA into and through the RuvAB complex. HJ branch migration allows RuvC to scan DNA until it finds its consensus sequence, where it cleaves and resolves the cruciform DNA. The protein is Holliday junction branch migration complex subunit RuvA of Rhodococcus erythropolis (strain PR4 / NBRC 100887).